The chain runs to 245 residues: Orotidine 5'-phosphate decarboxylase (245 aa).

Substrate-binding positions include D22, K44, 71–80, T131, R192, Q201, G221, and R222; that span reads DLKFHDIPNT. Residue K73 is the Proton donor of the active site.

This sequence belongs to the OMP decarboxylase family. Type 1 subfamily. As to quaternary structure, homodimer.

The enzyme catalyses orotidine 5'-phosphate + H(+) = UMP + CO2. It functions in the pathway pyrimidine metabolism; UMP biosynthesis via de novo pathway; UMP from orotate: step 2/2. Catalyzes the decarboxylation of orotidine 5'-monophosphate (OMP) to uridine 5'-monophosphate (UMP). This is Orotidine 5'-phosphate decarboxylase from Salmonella typhi.